Here is a 145-residue protein sequence, read N- to C-terminus: D-aminoacyl-tRNA deacylase (145 aa).

The short motif at 137–138 (GP) is the Gly-cisPro motif, important for rejection of L-amino acids element.

It belongs to the DTD family. As to quaternary structure, homodimer.

It is found in the cytoplasm. The enzyme catalyses glycyl-tRNA(Ala) + H2O = tRNA(Ala) + glycine + H(+). It carries out the reaction a D-aminoacyl-tRNA + H2O = a tRNA + a D-alpha-amino acid + H(+). Its function is as follows. An aminoacyl-tRNA editing enzyme that deacylates mischarged D-aminoacyl-tRNAs. Also deacylates mischarged glycyl-tRNA(Ala), protecting cells against glycine mischarging by AlaRS. Acts via tRNA-based rather than protein-based catalysis; rejects L-amino acids rather than detecting D-amino acids in the active site. By recycling D-aminoacyl-tRNA to D-amino acids and free tRNA molecules, this enzyme counteracts the toxicity associated with the formation of D-aminoacyl-tRNA entities in vivo and helps enforce protein L-homochirality. This chain is D-aminoacyl-tRNA deacylase, found in Shewanella pealeana (strain ATCC 700345 / ANG-SQ1).